Consider the following 228-residue polypeptide: L-ribulose-5-phosphate 4-epimerase UlaF (228 aa).

Residues 26–27, 43–44, and 72–73 contribute to the substrate site; these read GN, SG, and SS. 3 residues coordinate Zn(2+): aspartate 74, histidine 93, and histidine 95. Aspartate 118 functions as the Proton donor/acceptor in the catalytic mechanism. Residue histidine 167 coordinates Zn(2+). Tyrosine 225 (proton donor/acceptor) is an active-site residue.

Belongs to the aldolase class II family. AraD/FucA subfamily. The cofactor is Zn(2+).

It catalyses the reaction L-ribulose 5-phosphate = D-xylulose 5-phosphate. It functions in the pathway cofactor degradation; L-ascorbate degradation; D-xylulose 5-phosphate from L-ascorbate: step 4/4. Its function is as follows. Catalyzes the isomerization of L-ribulose 5-phosphate to D-xylulose 5-phosphate. Is involved in the anaerobic L-ascorbate utilization. In Salmonella paratyphi A (strain ATCC 9150 / SARB42), this protein is L-ribulose-5-phosphate 4-epimerase UlaF.